The primary structure comprises 769 residues: Protein lethal(2)denticleless (769 aa).

WD repeat units follow at residues 99-129 (CHFNAVFDLEWAPGQMRFVSASGDHTARLWE), 143-174 (GHTRSVKSAAFKRTDPAVFATGGRDGAILIWD), 194-249 (GHTG…KVWD), 264-303 (RHKLPYAGSSTFRGFTNLIVDASGTRLYANCMDNTIYCYN), 320-349 (NSTFYIKSCLSPDGKYLLSGSSDERAYIWN), and 362-393 (GHTVEVTCVAWGSSHDCPIVTCSDDARHKIWR). Positions 196-221 (TGGPGTPVSQRKQRTRTPKMAGGTTS) are disordered. Threonine 201 bears the Phosphothreonine mark. Position 204 is a phosphoserine (serine 204). 3 disordered regions span residues 448-467 (RLMDQNERTPGSVEKTTTKR), 476-562 (AGQE…HVYT), and 655-769 (SPRL…VGSD). At threonine 456 the chain carries Phosphothreonine. Phosphoserine is present on serine 459. The span at 503–518 (PSSQETACRHIQLQSI) shows a compositional bias: polar residues. Position 524 is a phosphoserine (serine 524). Residues 524 to 533 (SPSKRQKENS) show a composition bias toward basic and acidic residues. The span at 546 to 562 (STPSHSPLSENVNHVYT) shows a compositional bias: polar residues. Serine 655 is subject to Phosphoserine. Polar residues predominate over residues 657–666 (RLQSLRQSEC). A phosphoserine mark is found at serine 679, serine 691, and serine 711. Residues 689–704 (AGSSSHSHSQSQPKTP) are compositionally biased toward low complexity. The segment covering 705-714 (TSSRRNSETT) has biased composition (polar residues). The segment covering 728–743 (PAEETTTTNAAPSSSD) has biased composition (low complexity). Positions 758-769 (SMRTPTTAVGSD) are enriched in polar residues.

Belongs to the WD repeat cdt2 family. As to quaternary structure, component of the DCX(DTL) E3 ubiquitin ligase complex, at least composed of Cul-4, pic/DDB1, l(2)dtl/CDT2 and Roc1a. Ubiquitously expressed during embryogenesis with no sign of tissue specificity in expression up to stage 17.

Its subcellular location is the cytoplasm. It participates in protein modification; protein ubiquitination. In terms of biological role, substrate-specific adapter of a DCX (DDB1-CUL4-X-box) E3 ubiquitin-protein ligase complex required for cell cycle control. The DCX(DTL) complex, also named CRL4(CDT2) complex, mediates the polyubiquitination and subsequent degradation of E2f during S phase. E2f degradation is necessary to ensure proper development. Substrates require their interaction with PCNA for their polyubiquitination: substrates interact with PCNA via their PIP-box, leading to recruit the DCX(DTL) complex. The protein is Protein lethal(2)denticleless (l(2)dtl) of Drosophila melanogaster (Fruit fly).